The primary structure comprises 31 residues: Photosystem II reaction center protein T (31 aa).

A helical membrane pass occupies residues 3–23 (ALVYTFLLVGTLGIIFFSIFF).

Belongs to the PsbT family. In terms of assembly, PSII is composed of 1 copy each of membrane proteins PsbA, PsbB, PsbC, PsbD, PsbE, PsbF, PsbH, PsbI, PsbJ, PsbK, PsbL, PsbM, PsbT, PsbY, PsbZ, Psb30/Ycf12, at least 3 peripheral proteins of the oxygen-evolving complex and a large number of cofactors. It forms dimeric complexes.

The protein resides in the plastid. Its subcellular location is the chloroplast thylakoid membrane. Found at the monomer-monomer interface of the photosystem II (PS II) dimer, plays a role in assembly and dimerization of PSII. PSII is a light-driven water plastoquinone oxidoreductase, using light energy to abstract electrons from H(2)O, generating a proton gradient subsequently used for ATP formation. The chain is Photosystem II reaction center protein T from Chlamydomonas reinhardtii (Chlamydomonas smithii).